The sequence spans 281 residues: Large ribosomal subunit protein uL2 (281 aa).

Residues 223 to 281 (VRGSVMNPVDHPHGGGEGKQPVGRKSPLTPWGKIALGVKTRKTKKSSNKLILRRRKDAK) form a disordered region. Positions 261–281 (KTRKTKKSSNKLILRRRKDAK) are enriched in basic residues.

The protein belongs to the universal ribosomal protein uL2 family. As to quaternary structure, part of the 50S ribosomal subunit. Forms a bridge to the 30S subunit in the 70S ribosome.

One of the primary rRNA binding proteins. Required for association of the 30S and 50S subunits to form the 70S ribosome, for tRNA binding and peptide bond formation. It has been suggested to have peptidyltransferase activity; this is somewhat controversial. Makes several contacts with the 16S rRNA in the 70S ribosome. The chain is Large ribosomal subunit protein uL2 from Mycoplasmopsis synoviae (strain 53) (Mycoplasma synoviae).